Here is a 572-residue protein sequence, read N- to C-terminus: mRNA cap guanine-N(7) methyltransferase (572 aa).

2 disordered regions span residues 1-75 (MPED…GSRV) and 110-140 (EKAINTANPPPPSTTTTPSSTTSSSSSFPSS). Composition is skewed to basic and acidic residues over residues 24 to 39 (ANDGHTEFSRRDRVHD) and 59 to 69 (SADENKDKKYD). Residues 123 to 140 (TTTTPSSTTSSSSSFPSS) show a composition bias toward low complexity. One can recognise an mRNA cap 0 methyltransferase domain in the interval 262–571 (SPIYKLRNFN…FYVAFVFEKV (310 aa)). Position 271-272 (271-272 (NN)) interacts with mRNA. Residues Lys275, Cys302, Asp324, Asp366, Gln396, and Tyr401 each contribute to the S-adenosyl-L-methionine site.

Belongs to the class I-like SAM-binding methyltransferase superfamily. mRNA cap 0 methyltransferase family.

The protein localises to the nucleus. The enzyme catalyses a 5'-end (5'-triphosphoguanosine)-ribonucleoside in mRNA + S-adenosyl-L-methionine = a 5'-end (N(7)-methyl 5'-triphosphoguanosine)-ribonucleoside in mRNA + S-adenosyl-L-homocysteine. Its function is as follows. Responsible for methylating the 5'-cap structure of mRNAs. In Lodderomyces elongisporus (strain ATCC 11503 / CBS 2605 / JCM 1781 / NBRC 1676 / NRRL YB-4239) (Yeast), this protein is mRNA cap guanine-N(7) methyltransferase (ABD1).